Consider the following 347-residue polypeptide: Methionine import ATP-binding protein MetN (347 aa).

Residues 2–247 (ITTTGLTKVY…PGSELASALF (246 aa)) form the ABC transporter domain. 38–45 (GQSGAGKS) lines the ATP pocket.

Belongs to the ABC transporter superfamily. Methionine importer (TC 3.A.1.24) family. The complex is composed of two ATP-binding proteins (MetN), two transmembrane proteins (MetI) and a solute-binding protein (MetQ).

Its subcellular location is the cell membrane. It catalyses the reaction L-methionine(out) + ATP + H2O = L-methionine(in) + ADP + phosphate + H(+). The enzyme catalyses D-methionine(out) + ATP + H2O = D-methionine(in) + ADP + phosphate + H(+). Part of the ABC transporter complex MetNIQ involved in methionine import. Responsible for energy coupling to the transport system. This chain is Methionine import ATP-binding protein MetN, found in Streptomyces avermitilis (strain ATCC 31267 / DSM 46492 / JCM 5070 / NBRC 14893 / NCIMB 12804 / NRRL 8165 / MA-4680).